The following is a 428-amino-acid chain: Anaerobic glycerol-3-phosphate dehydrogenase subunit B (428 aa).

This sequence belongs to the anaerobic G-3-P dehydrogenase subunit B family. Composed of a catalytic GlpA/B dimer and of membrane bound GlpC. FMN is required as a cofactor.

The enzyme catalyses a quinone + sn-glycerol 3-phosphate = dihydroxyacetone phosphate + a quinol. It functions in the pathway polyol metabolism; glycerol degradation via glycerol kinase pathway; glycerone phosphate from sn-glycerol 3-phosphate (anaerobic route): step 1/1. Conversion of glycerol 3-phosphate to dihydroxyacetone. Uses fumarate or nitrate as electron acceptor. This is Anaerobic glycerol-3-phosphate dehydrogenase subunit B from Pasteurella multocida (strain Pm70).